The sequence spans 75 residues: Small ribosomal subunit protein bS18 (75 aa).

This sequence belongs to the bacterial ribosomal protein bS18 family. In terms of assembly, part of the 30S ribosomal subunit. Forms a tight heterodimer with protein bS6.

In terms of biological role, binds as a heterodimer with protein bS6 to the central domain of the 16S rRNA, where it helps stabilize the platform of the 30S subunit. The polypeptide is Small ribosomal subunit protein bS18 (Photobacterium profundum (strain SS9)).